Consider the following 591-residue polypeptide: Potassium channel KAT4 (591 aa).

At 1-32 the chain is on the cytoplasmic side; the sequence is MAARSELLRPAFGEASPSLGRFVINPHSCSYR. Residues 33–53 traverse the membrane as a helical segment; that stretch reads WWHMFLIMLVLYSAWASPFEL. The Extracellular segment spans residues 54–63; that stretch reads SMEKAASIAL. Residues 64–84 form a helical membrane-spanning segment; that stretch reads VVTDLVVDVFFAIDIALSFFV. Over 85-109 the chain is Cytoplasmic; that stretch reads AYRDTSTGLLITDRRKITMRYLKRP. Residues 110–130 traverse the membrane as a helical segment; it reads CFALDVASTIPLQIIYQLVTG. Residues 131 to 137 are Extracellular-facing; it reads KRQGLWG. The chain crosses the membrane as a helical; Voltage-sensor span at residues 138 to 158; sequence LLNLLRLWRLRRVSKLFARVE. The Cytoplasmic segment spans residues 159–172; sequence KDIRFNYLWTRLIK. A helical membrane pass occupies residues 173-193; the sequence is LLCVTLFALHFAACIYLWMAF. Topologically, residues 194–220 are extracellular; that stretch reads NYKIKELTWIGSQIHSFEDRSVWFCYT. The segment at residues 221 to 240 is an intramembrane region (pore-forming); it reads CAVYWSITTLATVGYGDLHA. The Extracellular portion of the chain corresponds to 241 to 246; that stretch reads TNIGEM. The helical transmembrane segment at 247 to 267 threads the bilayer; that stretch reads LFSIAFMLFNMGLTSYIIGNI. Residues 268-591 lie on the Cytoplasmic side of the membrane; that stretch reads TNLVVRETSN…IRDGDHLLFS (324 aa). 349-469 is a binding site for a nucleoside 3',5'-cyclic phosphate; sequence LFQGVSDSLI…YIVFSNFIQY (121 aa). The region spanning 521 to 591 is the KHA domain; the sequence is RVVIHEQLPN…IRDGDHLLFS (71 aa).

The protein belongs to the potassium channel family. Plant (TC 1.A.1.4) subfamily.

It localises to the membrane. Functionally, probable inward-rectifying potassium channel. Assuming opened or closed conformations in response to the voltage difference across the membrane, the channel is activated by hyperpolarization. This Oryza sativa subsp. japonica (Rice) protein is Potassium channel KAT4.